Here is a 419-residue protein sequence, read N- to C-terminus: Putative L-glutamine:3-amino-2,3-dideoxy-scyllo-inosose aminotransferase (419 aa).

N6-(pyridoxal phosphate)lysine is present on Lys199.

The protein belongs to the DegT/DnrJ/EryC1 family. L-glutamine:2-deoxy-scyllo-inosose/scyllo-inosose aminotransferase subfamily. The cofactor is pyridoxal 5'-phosphate.

It carries out the reaction 3-amino-2,3-dideoxy-scyllo-inosose + L-glutamine = 2-deoxystreptamine + 2-oxoglutaramate. Its pathway is metabolic intermediate biosynthesis; 2-deoxystreptamine biosynthesis; 2-deoxystreptamine from D-glucose 6-phosphate: step 4/4. It functions in the pathway antibiotic biosynthesis; kanamycin biosynthesis. In terms of biological role, catalyzes the transamination of 3-amino-2,3-dideoxy-scyllo-inosose (amino-DOI) into 2-deoxystreptamine (DOS). This Streptomyces kanamyceticus protein is Putative L-glutamine:3-amino-2,3-dideoxy-scyllo-inosose aminotransferase (kanD).